Consider the following 309-residue polypeptide: Aspartate carbamoyltransferase catalytic subunit (309 aa).

Residues Arg-56 and Thr-57 each contribute to the carbamoyl phosphate site. Lys-84 serves as a coordination point for L-aspartate. The carbamoyl phosphate site is built by Arg-106, His-136, and Gln-139. Arg-169 and Arg-221 together coordinate L-aspartate. Residues Ala-264 and Pro-265 each coordinate carbamoyl phosphate.

The protein belongs to the aspartate/ornithine carbamoyltransferase superfamily. ATCase family. Heterododecamer (2C3:3R2) of six catalytic PyrB chains organized as two trimers (C3), and six regulatory PyrI chains organized as three dimers (R2).

It carries out the reaction carbamoyl phosphate + L-aspartate = N-carbamoyl-L-aspartate + phosphate + H(+). It participates in pyrimidine metabolism; UMP biosynthesis via de novo pathway; (S)-dihydroorotate from bicarbonate: step 2/3. Functionally, catalyzes the condensation of carbamoyl phosphate and aspartate to form carbamoyl aspartate and inorganic phosphate, the committed step in the de novo pyrimidine nucleotide biosynthesis pathway. The polypeptide is Aspartate carbamoyltransferase catalytic subunit (Limosilactobacillus reuteri subsp. reuteri (strain JCM 1112) (Lactobacillus reuteri)).